The following is a 207-amino-acid chain: ATP-dependent Clp protease proteolytic subunit (207 aa).

The active-site Nucleophile is the Ser111. Residue His136 is part of the active site.

It belongs to the peptidase S14 family. As to quaternary structure, fourteen ClpP subunits assemble into 2 heptameric rings which stack back to back to give a disk-like structure with a central cavity, resembling the structure of eukaryotic proteasomes.

The protein resides in the cytoplasm. It carries out the reaction Hydrolysis of proteins to small peptides in the presence of ATP and magnesium. alpha-casein is the usual test substrate. In the absence of ATP, only oligopeptides shorter than five residues are hydrolyzed (such as succinyl-Leu-Tyr-|-NHMec, and Leu-Tyr-Leu-|-Tyr-Trp, in which cleavage of the -Tyr-|-Leu- and -Tyr-|-Trp bonds also occurs).. Cleaves peptides in various proteins in a process that requires ATP hydrolysis. Has a chymotrypsin-like activity. Plays a major role in the degradation of misfolded proteins. The sequence is that of ATP-dependent Clp protease proteolytic subunit from Proteus mirabilis (strain HI4320).